Consider the following 436-residue polypeptide: UDP-N-acetylglucosamine 1-carboxyvinyltransferase (436 aa).

Residue 22–23 participates in phosphoenolpyruvate binding; sequence KN. Arg96 contacts UDP-N-acetyl-alpha-D-glucosamine. Catalysis depends on Cys120, which acts as the Proton donor. A 2-(S-cysteinyl)pyruvic acid O-phosphothioketal modification is found at Cys120. UDP-N-acetyl-alpha-D-glucosamine-binding positions include 125 to 129, Asp309, and Ile331; that span reads RPIDL.

This sequence belongs to the EPSP synthase family. MurA subfamily.

It localises to the cytoplasm. The catalysed reaction is phosphoenolpyruvate + UDP-N-acetyl-alpha-D-glucosamine = UDP-N-acetyl-3-O-(1-carboxyvinyl)-alpha-D-glucosamine + phosphate. It functions in the pathway cell wall biogenesis; peptidoglycan biosynthesis. Functionally, cell wall formation. Adds enolpyruvyl to UDP-N-acetylglucosamine. The sequence is that of UDP-N-acetylglucosamine 1-carboxyvinyltransferase from Acidobacterium capsulatum (strain ATCC 51196 / DSM 11244 / BCRC 80197 / JCM 7670 / NBRC 15755 / NCIMB 13165 / 161).